A 381-amino-acid polypeptide reads, in one-letter code: tRNA pseudouridine synthase D (381 aa).

The active-site Nucleophile is Asp81. The TRUD domain occupies 160–335 (GMPNYFGPQR…TLGSRRFFWV (176 aa)).

This sequence belongs to the pseudouridine synthase TruD family.

It catalyses the reaction uridine(13) in tRNA = pseudouridine(13) in tRNA. In terms of biological role, responsible for synthesis of pseudouridine from uracil-13 in transfer RNAs. This chain is tRNA pseudouridine synthase D, found in Helicobacter pylori (strain Shi470).